We begin with the raw amino-acid sequence, 254 residues long: 5'/3'-nucleotidase SurE (254 aa).

A divalent metal cation contacts are provided by Asp9, Asp10, Ser40, and Asn93.

It belongs to the SurE nucleotidase family. Requires a divalent metal cation as cofactor.

The protein resides in the cytoplasm. It catalyses the reaction a ribonucleoside 5'-phosphate + H2O = a ribonucleoside + phosphate. It carries out the reaction a ribonucleoside 3'-phosphate + H2O = a ribonucleoside + phosphate. The enzyme catalyses [phosphate](n) + H2O = [phosphate](n-1) + phosphate + H(+). Functionally, nucleotidase with a broad substrate specificity as it can dephosphorylate various ribo- and deoxyribonucleoside 5'-monophosphates and ribonucleoside 3'-monophosphates with highest affinity to 3'-AMP. Also hydrolyzes polyphosphate (exopolyphosphatase activity) with the preference for short-chain-length substrates (P20-25). Might be involved in the regulation of dNTP and NTP pools, and in the turnover of 3'-mononucleotides produced by numerous intracellular RNases (T1, T2, and F) during the degradation of various RNAs. The protein is 5'/3'-nucleotidase SurE of Yersinia pseudotuberculosis serotype O:1b (strain IP 31758).